Consider the following 342-residue polypeptide: tRNA N6-adenosine threonylcarbamoyltransferase (342 aa).

Fe cation is bound by residues His111 and His115. Residues 134 to 138 (LVSGG), Asp167, Gly180, and Asn274 contribute to the substrate site. Asp302 contributes to the Fe cation binding site.

It belongs to the KAE1 / TsaD family. The cofactor is Fe(2+).

It is found in the cytoplasm. It catalyses the reaction L-threonylcarbamoyladenylate + adenosine(37) in tRNA = N(6)-L-threonylcarbamoyladenosine(37) in tRNA + AMP + H(+). Required for the formation of a threonylcarbamoyl group on adenosine at position 37 (t(6)A37) in tRNAs that read codons beginning with adenine. Is involved in the transfer of the threonylcarbamoyl moiety of threonylcarbamoyl-AMP (TC-AMP) to the N6 group of A37, together with TsaE and TsaB. TsaD likely plays a direct catalytic role in this reaction. The chain is tRNA N6-adenosine threonylcarbamoyltransferase from Herminiimonas arsenicoxydans.